A 119-amino-acid chain; its full sequence is Large ribosomal subunit protein uL18 (119 aa).

Belongs to the universal ribosomal protein uL18 family. Part of the 50S ribosomal subunit; part of the 5S rRNA/L5/L18/L25 subcomplex. Contacts the 5S and 23S rRNAs.

This is one of the proteins that bind and probably mediate the attachment of the 5S RNA into the large ribosomal subunit, where it forms part of the central protuberance. The polypeptide is Large ribosomal subunit protein uL18 (Nitratidesulfovibrio vulgaris (strain DP4) (Desulfovibrio vulgaris)).